Consider the following 62-residue polypeptide: Alpha-conotoxin-like Bn1.3 (62 aa).

An N-terminal signal peptide occupies residues 1 to 18 (MGMRMMFTVFLLVVLATA). A propeptide spanning residues 19 to 48 (VLPVTLDRASDGRNAAANAKTPRLIAPFIR) is cleaved from the precursor. 2 disulfide bridges follow: Cys-51–Cys-57 and Cys-52–Cys-61. Cys-61 carries the post-translational modification Cysteine amide.

This sequence belongs to the conotoxin A superfamily. Expressed by the venom duct.

The protein localises to the secreted. Does not show activity on the acetylcholine receptors tested. This chain is Alpha-conotoxin-like Bn1.3, found in Conus bandanus (Banded marble cone).